We begin with the raw amino-acid sequence, 96 residues long: Large ribosomal subunit protein uL23 (96 aa).

This sequence belongs to the universal ribosomal protein uL23 family. In terms of assembly, part of the 50S ribosomal subunit. Contacts protein L29, and trigger factor when it is bound to the ribosome.

In terms of biological role, one of the early assembly proteins it binds 23S rRNA. One of the proteins that surrounds the polypeptide exit tunnel on the outside of the ribosome. Forms the main docking site for trigger factor binding to the ribosome. The sequence is that of Large ribosomal subunit protein uL23 from Brevibacillus brevis (strain 47 / JCM 6285 / NBRC 100599).